Here is a 172-residue protein sequence, read N- to C-terminus: Transcriptional regulator TAC1 (172 aa).

The disordered stretch occupies residues 1–28 (MENIKNPKNADDCSDSISKNSHQGVDDS). Positions 15–28 (DSISKNSHQGVDDS) are enriched in polar residues. The C2H2-type zinc finger occupies 35–57 (YVCSFCIRGFSNAQALGGHMNIH). The short motif at 156 to 160 (LDLEL) is the EAR-like (transcriptional repression) element.

As to expression, preferentially expressed in roots and flowers. Slightly expressed in leaves and stems.

It is found in the nucleus. In terms of biological role, activation factor which mediates telomerase activity and potentiates responses to auxin through the regulation of BT2. Binds in vitro to the DNA sequence 5'-GACAGTGTTAC-3' of the BT2 promoter. The sequence is that of Transcriptional regulator TAC1 (TAC1) from Arabidopsis thaliana (Mouse-ear cress).